A 540-amino-acid chain; its full sequence is tRNA-2-methylthio-N(6)-dimethylallyladenosine synthase (540 aa).

Residues 4 to 120 (RSYEVRTFGC…LPVLLERARH (117 aa)) form the MTTase N-terminal domain. [4Fe-4S] cluster contacts are provided by Cys-13, Cys-49, Cys-83, Cys-157, Cys-161, and Cys-164. In terms of domain architecture, Radical SAM core spans 143-374 (RASHHSAWVS…ALQDEISWAE (232 aa)). Residues 376-468 (RALVGRRVEV…PHHLTADGPL (93 aa)) enclose the TRAM domain. The interval 480 to 540 (WALGRDGDGG…ADACCTPVRR (61 aa)) is disordered. Composition is skewed to low complexity over residues 492 to 502 (AAAQQPADGRP) and 520 to 533 (GPAS…GADA).

The protein belongs to the methylthiotransferase family. MiaB subfamily. Monomer. The cofactor is [4Fe-4S] cluster.

It is found in the cytoplasm. It catalyses the reaction N(6)-dimethylallyladenosine(37) in tRNA + (sulfur carrier)-SH + AH2 + 2 S-adenosyl-L-methionine = 2-methylsulfanyl-N(6)-dimethylallyladenosine(37) in tRNA + (sulfur carrier)-H + 5'-deoxyadenosine + L-methionine + A + S-adenosyl-L-homocysteine + 2 H(+). Its function is as follows. Catalyzes the methylthiolation of N6-(dimethylallyl)adenosine (i(6)A), leading to the formation of 2-methylthio-N6-(dimethylallyl)adenosine (ms(2)i(6)A) at position 37 in tRNAs that read codons beginning with uridine. The protein is tRNA-2-methylthio-N(6)-dimethylallyladenosine synthase of Frankia casuarinae (strain DSM 45818 / CECT 9043 / HFP020203 / CcI3).